A 233-amino-acid polypeptide reads, in one-letter code: Large ribosomal subunit protein bL19c (233 aa).

The transit peptide at methionine 1–arginine 77 directs the protein to the chloroplast.

Component of the chloroplast large ribosomal subunit (LSU). Mature 70S chloroplast ribosomes of higher plants consist of a small (30S) and a large (50S) subunit. The 30S small subunit contains 1 molecule of ribosomal RNA (16S rRNA) and 24 different proteins. The 50S large subunit contains 3 rRNA molecules (23S, 5S and 4.5S rRNA) and 33 different proteins.

The protein localises to the plastid. Its subcellular location is the chloroplast. Functionally, component of the chloroplast ribosome (chloro-ribosome), a dedicated translation machinery responsible for the synthesis of chloroplast genome-encoded proteins, including proteins of the transcription and translation machinery and components of the photosynthetic apparatus. The polypeptide is Large ribosomal subunit protein bL19c (RPL19) (Spinacia oleracea (Spinach)).